A 227-amino-acid chain; its full sequence is Cytidylate kinase (227 aa).

Gly12 to Thr20 contacts ATP.

It belongs to the cytidylate kinase family. Type 1 subfamily.

The protein resides in the cytoplasm. It catalyses the reaction CMP + ATP = CDP + ADP. It carries out the reaction dCMP + ATP = dCDP + ADP. The polypeptide is Cytidylate kinase (Shigella boydii serotype 4 (strain Sb227)).